An 80-amino-acid polypeptide reads, in one-letter code: Cell division activator CedA (80 aa).

This sequence belongs to the CedA family.

In terms of biological role, activates the cell division inhibited by chromosomal DNA over-replication. The sequence is that of Cell division activator CedA from Escherichia coli O139:H28 (strain E24377A / ETEC).